The chain runs to 603 residues: NADPH-dependent diflavin oxidoreductase 1 (603 aa).

Positions 10–155 (VTILYGSETG…YYSEWETNLL (146 aa)) constitute a Flavodoxin-like domain. FMN is bound by residues 16 to 21 (SETGNA), 64 to 67 (STTG), 102 to 111 (IGDSSYPKFN), and glutamate 137. Positions 209–451 (TNLLLGSVKA…HKSNLKFELP (243 aa)) constitute an FAD-binding FR-type domain. Residues arginine 359, 390–393 (RLFS), and 422–425 (GLCT) contribute to the FAD site. NADP(+) is bound by residues threonine 465 and 521 to 522 (SR). Tryptophan 603 lines the FAD pocket.

The protein belongs to the NADPH-dependent diflavin oxidoreductase NDOR1 family. It in the N-terminal section; belongs to the flavodoxin family. This sequence in the C-terminal section; belongs to the flavoprotein pyridine nucleotide cytochrome reductase family. In terms of assembly, interacts with DRE2; as part of the cytosolic iron-sulfur (Fe-S) protein assembly (CIA) machinery. FAD serves as cofactor. The cofactor is FMN.

It localises to the cytoplasm. Its subcellular location is the mitochondrion. It carries out the reaction 2 oxidized [2Fe-2S]-[protein] + NADPH = 2 reduced [2Fe-2S]-[protein] + NADP(+) + H(+). Its function is as follows. NADPH-dependent reductase which is a central component of the cytosolic iron-sulfur (Fe-S) protein assembly (CIA) machinery. Transfers electrons from NADPH via its FAD and FMN prosthetic groups to the [2Fe-2S] cluster of DRE2, another key component of the CIA machinery. In turn, this reduced cluster provides electrons for assembly of cytosolic iron-sulfur cluster proteins. Positively controls H(2)O(2)-induced cell death. This chain is NADPH-dependent diflavin oxidoreductase 1, found in Debaryomyces hansenii (strain ATCC 36239 / CBS 767 / BCRC 21394 / JCM 1990 / NBRC 0083 / IGC 2968) (Yeast).